The sequence spans 444 residues: Putative zinc metalloprotease XF_1047 (444 aa).

Residue histidine 22 coordinates Zn(2+). Residue glutamate 23 is part of the active site. Histidine 26 lines the Zn(2+) pocket. A helical membrane pass occupies residues 98–120 (IAIVAAGPLANLLLCMLLLWVLF). The region spanning 192–276 (TLELSKLKQP…DGHPGMIEIR (85 aa)) is the PDZ domain. 2 helical membrane passes run 371-393 (VGWF…LFPI) and 418-440 (AMAA…AFYN).

Belongs to the peptidase M50B family. Zn(2+) serves as cofactor.

It localises to the cell inner membrane. The protein is Putative zinc metalloprotease XF_1047 of Xylella fastidiosa (strain 9a5c).